The following is a 1088-amino-acid chain: DNA mismatch repair protein MutS (1088 aa).

The interval 498–579 (PLDGITPPDD…SFEMPSLHGH (82 aa)) is disordered. Acidic residues predominate over residues 537–546 (DLFDEEEEQE). Residue 816 to 823 (GPNMSGKS) participates in ATP binding. The segment at 1000–1048 (LERRAPRSTPQPAPERTEERPAAGRPTARSHSAARGDPPRAPDGQLSLF) is disordered.

It belongs to the DNA mismatch repair MutS family.

Functionally, this protein is involved in the repair of mismatches in DNA. It is possible that it carries out the mismatch recognition step. This protein has a weak ATPase activity. The polypeptide is DNA mismatch repair protein MutS (Roseiflexus castenholzii (strain DSM 13941 / HLO8)).